We begin with the raw amino-acid sequence, 163 residues long: Cytochrome b6-f complex subunit 4 (163 aa).

Transmembrane regions (helical) follow at residues L36–V56, L95–E115, and T131–I151.

It belongs to the cytochrome b family. PetD subfamily. In terms of assembly, the 4 large subunits of the cytochrome b6-f complex are cytochrome b6, subunit IV (17 kDa polypeptide, petD), cytochrome f and the Rieske protein, while the 4 small subunits are petG, petL, petM and petN. The complex functions as a dimer.

It localises to the plastid. It is found in the chloroplast thylakoid membrane. Component of the cytochrome b6-f complex, which mediates electron transfer between photosystem II (PSII) and photosystem I (PSI), cyclic electron flow around PSI, and state transitions. The sequence is that of Cytochrome b6-f complex subunit 4 from Pelargonium hortorum (Common geranium).